The chain runs to 445 residues: KIN17-like protein (445 aa).

Residues 26 to 50 (WYCQLCEKQCRDENGFKCHISSESH) form a C2H2-type zinc finger. 2 stretches are compositionally biased toward low complexity: residues 215 to 229 (NTTTTTTNTTTTTTN) and 239 to 253 (NDNNSSNNNYNDQTN). Residues 215 to 256 (NTTTTTTNTTTTTTNKNIFDKLKTNDNNSSNNNYNDQTNPKP) are disordered.

Belongs to the KIN17 family.

The sequence is that of KIN17-like protein from Dictyostelium discoideum (Social amoeba).